We begin with the raw amino-acid sequence, 245 residues long: MAVRASFEKNNEIGCFAKLTNTYCLVAIGGSENFYSVFEGELSETMPVIHASIAGCRIIGRMCVGNRHGLLVPNNTTDQELQHIRNCLPDSVRIQRVEERLSALGNVIACNDYVALVHPDLDRETEEILADTLKVEVFRQTVAEQVLVGSYCAFSNQGGLVHAKTSIEDQDELSSLLQVPLVAGTVNRGSEVIAAGMVVNDWCAFCGLDTTSTELSVIESVFRLSETQPSAIATTMRDSLIDSLT.

The protein belongs to the eIF-6 family. In terms of assembly, monomer. Associates with the 60S ribosomal subunit.

It is found in the cytoplasm. It localises to the nucleus. The protein localises to the nucleolus. In terms of biological role, binds to the 60S ribosomal subunit and prevents its association with the 40S ribosomal subunit to form the 80S initiation complex in the cytoplasm. May also be involved in ribosome biogenesis. The protein is Eukaryotic translation initiation factor 6 (eif6) of Danio rerio (Zebrafish).